We begin with the raw amino-acid sequence, 497 residues long: Serine hydroxymethyltransferase (497 aa).

Residues leucine 176 and 180–182 (GHL) contribute to the (6S)-5,6,7,8-tetrahydrofolate site. Lysine 289 is modified (N6-(pyridoxal phosphate)lysine).

This sequence belongs to the SHMT family. Homodimer. The cofactor is pyridoxal 5'-phosphate.

The protein resides in the cytoplasm. It catalyses the reaction (6R)-5,10-methylene-5,6,7,8-tetrahydrofolate + glycine + H2O = (6S)-5,6,7,8-tetrahydrofolate + L-serine. The protein operates within one-carbon metabolism; tetrahydrofolate interconversion. It participates in amino-acid biosynthesis; glycine biosynthesis; glycine from L-serine: step 1/1. Its function is as follows. Catalyzes the reversible interconversion of serine and glycine with tetrahydrofolate (THF) serving as the one-carbon carrier. This reaction serves as the major source of one-carbon groups required for the biosynthesis of purines, thymidylate, methionine, and other important biomolecules. Also exhibits THF-independent aldolase activity toward beta-hydroxyamino acids, producing glycine and aldehydes, via a retro-aldol mechanism. The protein is Serine hydroxymethyltransferase of Chlamydia trachomatis serovar A (strain ATCC VR-571B / DSM 19440 / HAR-13).